We begin with the raw amino-acid sequence, 233 residues long: Lipoprotein-releasing system ATP-binding protein LolD (233 aa).

In terms of domain architecture, ABC transporter spans 6–233 (LQCDNLCKRY…TAELSLMGAE (228 aa)). Position 42–49 (42–49 (GSSGSGKS)) interacts with ATP.

This sequence belongs to the ABC transporter superfamily. Lipoprotein translocase (TC 3.A.1.125) family. As to quaternary structure, the complex is composed of two ATP-binding proteins (LolD) and two transmembrane proteins (LolC and LolE).

The protein localises to the cell inner membrane. Its function is as follows. Part of the ABC transporter complex LolCDE involved in the translocation of mature outer membrane-directed lipoproteins, from the inner membrane to the periplasmic chaperone, LolA. Responsible for the formation of the LolA-lipoprotein complex in an ATP-dependent manner. This Salmonella paratyphi A (strain ATCC 9150 / SARB42) protein is Lipoprotein-releasing system ATP-binding protein LolD.